The sequence spans 176 residues: Cytochrome b (176 aa).

3 helical membrane-spanning segments follow: residues 33–53, 77–98, and 113–133; these read FGSL…FLAM, WLLR…YLHI, and WNVG…GYVL. Heme b is bound by residues histidine 83 and histidine 97.

This sequence belongs to the cytochrome b family. The cytochrome bc1 complex contains 11 subunits: 3 respiratory subunits (MT-CYB, CYC1 and UQCRFS1), 2 core proteins (UQCRC1 and UQCRC2) and 6 low-molecular weight proteins (UQCRH/QCR6, UQCRB/QCR7, UQCRQ/QCR8, UQCR10/QCR9, UQCR11/QCR10 and a cleavage product of UQCRFS1). This cytochrome bc1 complex then forms a dimer. Heme b is required as a cofactor.

It is found in the mitochondrion inner membrane. Functionally, component of the ubiquinol-cytochrome c reductase complex (complex III or cytochrome b-c1 complex) that is part of the mitochondrial respiratory chain. The b-c1 complex mediates electron transfer from ubiquinol to cytochrome c. Contributes to the generation of a proton gradient across the mitochondrial membrane that is then used for ATP synthesis. The protein is Cytochrome b (MT-CYB) of Eumops perotis (Western bonneted bat).